Reading from the N-terminus, the 148-residue chain is Large ribosomal subunit protein uL15 (148 aa).

The segment covering 1 to 30 (MPSRLRKTRKLRGHVSHGHGRIGKHRKHPG) has biased composition (basic residues). Residues 1 to 38 (MPSRLRKTRKLRGHVSHGHGRIGKHRKHPGGRGNAGGL) are disordered. His-39 is subject to (3S)-3-hydroxyhistidine. N6-acetyllysine is present on residues Lys-47 and Lys-55. At Ser-68 the chain carries Phosphoserine. Position 110 is an N6-acetyllysine (Lys-110).

Belongs to the universal ribosomal protein uL15 family. Post-translationally, hydroxylated on His-39 by MINA.

The sequence is that of Large ribosomal subunit protein uL15 (RPL27A) from Pan troglodytes (Chimpanzee).